A 336-amino-acid polypeptide reads, in one-letter code: 3-isopropylmalate dehydrogenase (336 aa).

The substrate site is built by Arg87, Arg97, Arg121, and Asp211. Positions 211, 235, and 239 each coordinate Mg(2+). Residue 271–283 participates in NAD(+) binding; that stretch reads GSAPDIAGQGVAD.

The protein belongs to the isocitrate and isopropylmalate dehydrogenases family. LeuB type 2 subfamily. As to quaternary structure, homodimer. It depends on Mg(2+) as a cofactor. Mn(2+) serves as cofactor.

Its subcellular location is the cytoplasm. It carries out the reaction (2R,3S)-3-isopropylmalate + NAD(+) = 4-methyl-2-oxopentanoate + CO2 + NADH. It participates in amino-acid biosynthesis; L-leucine biosynthesis; L-leucine from 3-methyl-2-oxobutanoate: step 3/4. In terms of biological role, catalyzes the oxidation of 3-carboxy-2-hydroxy-4-methylpentanoate (3-isopropylmalate) to 3-carboxy-4-methyl-2-oxopentanoate. The product decarboxylates to 4-methyl-2 oxopentanoate. The polypeptide is 3-isopropylmalate dehydrogenase (Mycobacterium avium (strain 104)).